A 489-amino-acid polypeptide reads, in one-letter code: 3-octaprenyl-4-hydroxybenzoate carboxy-lyase (489 aa).

Asparagine 172 contributes to the Mn(2+) binding site. Residues 175–177 (IYR), 189–191 (RWL), and 194–195 (RG) contribute to the prenylated FMN site. Glutamate 238 is a binding site for Mn(2+). Aspartate 287 functions as the Proton donor in the catalytic mechanism.

Belongs to the UbiD family. Homohexamer. The cofactor is prenylated FMN. Mn(2+) serves as cofactor.

Its subcellular location is the cell membrane. The catalysed reaction is a 4-hydroxy-3-(all-trans-polyprenyl)benzoate + H(+) = a 2-(all-trans-polyprenyl)phenol + CO2. Its pathway is cofactor biosynthesis; ubiquinone biosynthesis. Its function is as follows. Catalyzes the decarboxylation of 3-octaprenyl-4-hydroxy benzoate to 2-octaprenylphenol, an intermediate step in ubiquinone biosynthesis. In Aeromonas hydrophila subsp. hydrophila (strain ATCC 7966 / DSM 30187 / BCRC 13018 / CCUG 14551 / JCM 1027 / KCTC 2358 / NCIMB 9240 / NCTC 8049), this protein is 3-octaprenyl-4-hydroxybenzoate carboxy-lyase.